A 391-amino-acid chain; its full sequence is Cold-shock protein CS120 (391 aa).

17 tandem repeats follow at residues 9–31 (GEKK…DHKE), 49–62 (TGGA…AGTT), 72–94 (GEKK…DHQQ), 95–108 (TGGT…TGTA), 115–128 (TGGT…TGTA), 135–148 (TGGT…TGVT), 156–178 (GEKK…DHQQ), 179–192 (TGGT…TGTA), 199–212 (GGGT…TGMT), 220–242 (GEKK…DHQQ), 243–256 (TGGT…TGTA), 263–276 (GGGT…TGMT), 284–306 (GEKK…DHQQ), 307–320 (TGGA…TGTA), 327–340 (GGGT…AGVI), 350–363 (TGGT…TGTT), and 374–391 (GEKK…PGQH). Residues 9 to 391 (GEKKGIMEKI…KIKDKLPGQH (383 aa)) are 6 X 23 AA approximate repeats. Over residues 21 to 33 (KLPGGHGDHKETA) the composition is skewed to basic and acidic residues. The segment at 21-391 (KLPGGHGDHK…KIKDKLPGQH (371 aa)) is disordered. Over residues 34-59 (GTHGHPGTATHGAPATGGAYGQQGHA) the composition is skewed to low complexity. The segment at 49-363 (TGGAYGQQGH…HGQHGHTGTT (315 aa)) is 11 X 14 AA approximate repeats. The segment covering 70 to 92 (HAGEKKGVMENIKDKLPGGHQDH) has biased composition (basic and acidic residues). Positions 93–145 (QQTGGTYGQQGHTGTATHGTPATGGTYGQQGHTGTATHGTPATGGTYGEQGHT) are enriched in low complexity. Basic and acidic residues predominate over residues 155 to 176 (TGEKKGVMENIKEKLPGGHGDH). Low complexity predominate over residues 177 to 196 (QQTGGTYGQQGHTGTATHGT). Basic and acidic residues predominate over residues 219–240 (TGEKKGVMENIKDKLPGGHGDH). Low complexity-rich tracts occupy residues 241 to 260 (QQTG…TQGT) and 272 to 282 (HTGMTGAGTHS). A compositionally biased stretch (basic and acidic residues) spans 283–304 (TGEKKGVMENIKEKLPGGHSDH). 2 stretches are compositionally biased toward low complexity: residues 305-324 (QQTG…THGT) and 333-351 (QHGH…TATG). Residues 361–372 (GTTGTGTHGSDG) show a composition bias toward gly residues. Residues 373-391 (IGEKKSLMDKIKDKLPGQH) show a composition bias toward basic and acidic residues.

This sequence belongs to the plant dehydrin family.

Functionally, may reduce intracellular freezing damage during winter by hydrogen-bonding to the lattice of the nascent ice crystals, thus modifying the structure and/or propagation of ice crystals. The chain is Cold-shock protein CS120 (CS120) from Triticum aestivum (Wheat).